Consider the following 393-residue polypeptide: Elongation factor Tu (393 aa).

One can recognise a tr-type G domain in the interval 10–203 (KPHVNIGTIG…AVDSFIPDPV (194 aa)). Residues 19 to 26 (GHVDHGKT) are G1. 19–26 (GHVDHGKT) is a GTP binding site. A Mg(2+)-binding site is contributed by Thr-26. Residues 60 to 64 (GITIS) form a G2 region. The G3 stretch occupies residues 81–84 (DCPG). GTP-binding positions include 81-85 (DCPGH) and 136-139 (NKVD). The segment at 136–139 (NKVD) is G4. Residues 173–175 (SAL) are G5.

Belongs to the TRAFAC class translation factor GTPase superfamily. Classic translation factor GTPase family. EF-Tu/EF-1A subfamily. As to quaternary structure, monomer.

It localises to the cytoplasm. The catalysed reaction is GTP + H2O = GDP + phosphate + H(+). Functionally, GTP hydrolase that promotes the GTP-dependent binding of aminoacyl-tRNA to the A-site of ribosomes during protein biosynthesis. The protein is Elongation factor Tu of Pelodictyon phaeoclathratiforme (strain DSM 5477 / BU-1).